The chain runs to 329 residues: Malate dehydrogenase (329 aa).

13-19 (GAAGNIS) is a binding site for NAD(+). Substrate contacts are provided by arginine 94 and arginine 100. NAD(+) contacts are provided by residues asparagine 107, glutamine 114, and 131 to 133 (VGN). Asparagine 133 and arginine 164 together coordinate substrate. The active-site Proton acceptor is the histidine 189.

This sequence belongs to the LDH/MDH superfamily. MDH type 2 family.

It catalyses the reaction (S)-malate + NAD(+) = oxaloacetate + NADH + H(+). Its function is as follows. Catalyzes the reversible oxidation of malate to oxaloacetate. In Psychrobacter arcticus (strain DSM 17307 / VKM B-2377 / 273-4), this protein is Malate dehydrogenase.